The following is a 640-amino-acid chain: Asparagine synthetase domain-containing protein 1 (640 aa).

The active-site For GATase activity is the C2. Residues C2 to K184 enclose the Glutamine amidotransferase type-2 domain. The region spanning Q286 to K602 is the Asparagine synthetase domain.

The sequence is that of Asparagine synthetase domain-containing protein 1 (ASNSD1) from Bos taurus (Bovine).